Here is a 130-residue protein sequence, read N- to C-terminus: Glycine cleavage system H protein (130 aa).

The 82-residue stretch at 25 to 106 folds into the Lipoyl-binding domain; the sequence is MALIGISDFA…PFDSWMIKVK (82 aa). Position 66 is an N6-lipoyllysine (Lys-66).

It belongs to the GcvH family. The glycine cleavage system is composed of four proteins: P, T, L and H. (R)-lipoate is required as a cofactor.

In terms of biological role, the glycine cleavage system catalyzes the degradation of glycine. The H protein shuttles the methylamine group of glycine from the P protein to the T protein. The protein is Glycine cleavage system H protein of Leptospira interrogans serogroup Icterohaemorrhagiae serovar copenhageni (strain Fiocruz L1-130).